The chain runs to 357 residues: S-adenosylmethionine:tRNA ribosyltransferase-isomerase (357 aa).

Belongs to the QueA family. In terms of assembly, monomer.

It is found in the cytoplasm. The enzyme catalyses 7-aminomethyl-7-carbaguanosine(34) in tRNA + S-adenosyl-L-methionine = epoxyqueuosine(34) in tRNA + adenine + L-methionine + 2 H(+). The protein operates within tRNA modification; tRNA-queuosine biosynthesis. In terms of biological role, transfers and isomerizes the ribose moiety from AdoMet to the 7-aminomethyl group of 7-deazaguanine (preQ1-tRNA) to give epoxyqueuosine (oQ-tRNA). The polypeptide is S-adenosylmethionine:tRNA ribosyltransferase-isomerase (Buchnera aphidicola subsp. Acyrthosiphon pisum (strain Tuc7)).